A 123-amino-acid chain; its full sequence is Small ribosomal subunit protein uS12 (123 aa).

The segment at 1-30 (MPTIQQLIRKPRQPKIKRSKSQHMEGCPQK) is disordered. The span at 9 to 21 (RKPRQPKIKRSKS) shows a compositional bias: basic residues. At Asp-89 the chain carries 3-methylthioaspartic acid. The segment at 104-123 (TQGVKDRRQRRSKYGAKRPK) is disordered. Residues 110 to 123 (RRQRRSKYGAKRPK) show a composition bias toward basic residues.

Belongs to the universal ribosomal protein uS12 family. Part of the 30S ribosomal subunit. Contacts proteins S8 and S17. May interact with IF1 in the 30S initiation complex.

With S4 and S5 plays an important role in translational accuracy. Its function is as follows. Interacts with and stabilizes bases of the 16S rRNA that are involved in tRNA selection in the A site and with the mRNA backbone. Located at the interface of the 30S and 50S subunits, it traverses the body of the 30S subunit contacting proteins on the other side and probably holding the rRNA structure together. The combined cluster of proteins S8, S12 and S17 appears to hold together the shoulder and platform of the 30S subunit. This chain is Small ribosomal subunit protein uS12, found in Jannaschia sp. (strain CCS1).